Here is a 460-residue protein sequence, read N- to C-terminus: UDP-glucuronate 4-epimerase 6 (460 aa).

The next 2 membrane-spanning stretches (helical) occupy residues A41–S61 and G111–L131. S113–F144 contributes to the NAD(+) binding site. The Proton acceptor role is filled by Y263.

The protein belongs to the NAD(P)-dependent epimerase/dehydratase family. Homodimer. In terms of tissue distribution, in roots, leaf veins, siliques, flowers, pollen and stems.

Its subcellular location is the golgi apparatus. The protein localises to the golgi stack membrane. It carries out the reaction UDP-alpha-D-glucuronate = UDP-alpha-D-galacturonate. Functionally, involved in the synthesis of the negatively charged monosaccharide that forms the backbone of pectic cell wall components. This is UDP-glucuronate 4-epimerase 6 (GAE6) from Arabidopsis thaliana (Mouse-ear cress).